The following is a 309-amino-acid chain: Glycine-rich RNA-binding protein 3, mitochondrial (309 aa).

The N-terminal 37 residues, 1–37 (MAFLSKFGNILKQTTNKQLNAQVSLSSPSLFQAIRCM), are a transit peptide targeting the mitochondrion. The RRM domain occupies 40–118 (SKLFIGGMAY…RVVKVNYAND (79 aa)). Residues 247 to 309 (FAGDSQFGGS…GEFEDVAKRA (63 aa)) are disordered. The segment covering 258-273 (VGNSSQFGGDNTQFTA) has biased composition (polar residues).

Belongs to the GR-RBP family. Homodimer. Interacts with ORRM2 and MORF8/RIP1. Interacts with RBG5/ORRM4. Binds to RBG2/ORRM5.

It localises to the mitochondrion. Its function is as follows. Possibly has a role in RNA transcription or processing during stress. Involved in C-to-U editing of mitochondrial RNA. Functions as a minor mitochondrial editing factor. Controls 6 percent of the mitochondrial editing sites. This is Glycine-rich RNA-binding protein 3, mitochondrial from Arabidopsis thaliana (Mouse-ear cress).